A 372-amino-acid polypeptide reads, in one-letter code: Cytochrome b (372 aa).

The next 4 membrane-spanning stretches (helical) occupy residues F25–I45, W69–I90, W105–L125, and F170–M190. Heme b is bound by residues H75 and H89. Heme b-binding residues include H174 and H188. An a ubiquinone-binding site is contributed by H193. A run of 4 helical transmembrane segments spans residues H218–T238, L280–H300, L312–T332, and F339–P358.

It belongs to the cytochrome b family. As to quaternary structure, the cytochrome bc1 complex contains 3 respiratory subunits (MT-CYB, CYC1 and UQCRFS1), 2 core proteins (UQCRC1 and UQCRC2) and probably 6 low-molecular weight proteins. The cofactor is heme b.

The protein localises to the mitochondrion inner membrane. Component of the ubiquinol-cytochrome c reductase complex (complex III or cytochrome b-c1 complex) that is part of the mitochondrial respiratory chain. The b-c1 complex mediates electron transfer from ubiquinol to cytochrome c. Contributes to the generation of a proton gradient across the mitochondrial membrane that is then used for ATP synthesis. This chain is Cytochrome b (MT-CYB), found in Lycodon semicarinatus (Ryukyu odd-tooth snake).